Reading from the N-terminus, the 595-residue chain is Aspartate--tRNA ligase (595 aa).

Glu176 serves as a coordination point for L-aspartate. An aspartate region spans residues 200–203 (QIFK). Arg222 is an L-aspartate binding site. ATP contacts are provided by residues 222-224 (RDE) and Gln231. His450 serves as a coordination point for L-aspartate. Glu484 contributes to the ATP binding site. Arg491 contributes to the L-aspartate binding site. 536–539 (GLDR) is a binding site for ATP.

This sequence belongs to the class-II aminoacyl-tRNA synthetase family. Type 1 subfamily. In terms of assembly, homodimer.

Its subcellular location is the cytoplasm. It carries out the reaction tRNA(Asp) + L-aspartate + ATP = L-aspartyl-tRNA(Asp) + AMP + diphosphate. Its function is as follows. Catalyzes the attachment of L-aspartate to tRNA(Asp) in a two-step reaction: L-aspartate is first activated by ATP to form Asp-AMP and then transferred to the acceptor end of tRNA(Asp). This Halalkalibacterium halodurans (strain ATCC BAA-125 / DSM 18197 / FERM 7344 / JCM 9153 / C-125) (Bacillus halodurans) protein is Aspartate--tRNA ligase.